Here is a 326-residue protein sequence, read N- to C-terminus: Zinc finger protein 830 (326 aa).

Over residues Met1 to Lys11 the composition is skewed to basic residues. The tract at residues Met1 to Ser37 is disordered. Basic and acidic residues predominate over residues Val13–Glu36. The C2H2-type zinc-finger motif lies at Cys50 to His72. Low complexity predominate over residues Thr83–Thr108. Disordered regions lie at residues Thr83–Asp214, Glu237–Arg257, and Glu276–Glu309. Polar residues predominate over residues His180 to Pro195. Residues Lys224–Glu295 adopt a coiled-coil conformation. Positions Glu276–Arg286 are enriched in basic and acidic residues. Residues Pro298 to Glu309 are compositionally biased toward acidic residues.

It is found in the nucleus. It localises to the chromosome. The protein localises to the nucleus speckle. May act as an important regulator of the cell cycle that participates in the maintenance of genome integrity. This is Zinc finger protein 830 from Danio rerio (Zebrafish).